We begin with the raw amino-acid sequence, 215 residues long: Large ribosomal subunit protein uL4 (215 aa).

A disordered region spans residues A43 to Q100.

It belongs to the universal ribosomal protein uL4 family. As to quaternary structure, part of the 50S ribosomal subunit.

Functionally, one of the primary rRNA binding proteins, this protein initially binds near the 5'-end of the 23S rRNA. It is important during the early stages of 50S assembly. It makes multiple contacts with different domains of the 23S rRNA in the assembled 50S subunit and ribosome. In terms of biological role, forms part of the polypeptide exit tunnel. The polypeptide is Large ribosomal subunit protein uL4 (Mycolicibacterium smegmatis (Mycobacterium smegmatis)).